The primary structure comprises 575 residues: Phosphoenolpyruvate-protein phosphotransferase (575 aa).

The active-site Tele-phosphohistidine intermediate is histidine 189. 2 residues coordinate phosphoenolpyruvate: arginine 296 and arginine 332. The Mg(2+) site is built by glutamate 431 and aspartate 455. Phosphoenolpyruvate contacts are provided by residues 454-455 and arginine 465; that span reads ND. Cysteine 502 functions as the Proton donor in the catalytic mechanism.

It belongs to the PEP-utilizing enzyme family. Homodimer. Requires Mg(2+) as cofactor.

The protein localises to the cytoplasm. The catalysed reaction is L-histidyl-[protein] + phosphoenolpyruvate = N(pros)-phospho-L-histidyl-[protein] + pyruvate. General (non sugar-specific) component of the phosphoenolpyruvate-dependent sugar phosphotransferase system (sugar PTS). This major carbohydrate active-transport system catalyzes the phosphorylation of incoming sugar substrates concomitantly with their translocation across the cell membrane. Enzyme I transfers the phosphoryl group from phosphoenolpyruvate (PEP) to the phosphoryl carrier protein (HPr). This is Phosphoenolpyruvate-protein phosphotransferase (ptsI) from Haemophilus influenzae (strain ATCC 51907 / DSM 11121 / KW20 / Rd).